We begin with the raw amino-acid sequence, 78 residues long: Vacuolar ATPase assembly integral membrane protein VMA21 (78 aa).

Residues 1–14 (MPADIPKSVVQKLV) are Cytoplasmic-facing. The chain crosses the membrane as a helical span at residues 15–35 (FFTAAMIICPVATFFICQYLF). At 36–38 (SNN) the chain is on the lumenal side. Residues 39–59 (AIISGGVSALVANIVLIGYVV) traverse the membrane as a helical segment. Residues 60–78 (AAFMEDTTEQEPEETKKSR) lie on the Cytoplasmic side of the membrane. The short motif at 75–78 (KKSR) is the Prevents secretion from ER element.

The protein belongs to the VMA21 family.

Its subcellular location is the endoplasmic reticulum membrane. It is found in the endoplasmic reticulum-Golgi intermediate compartment membrane. The protein localises to the cytoplasmic vesicle. It localises to the COPII-coated vesicle membrane. Required for the assembly of the V0 complex of the vacuolar ATPase (V-ATPase) in the endoplasmic reticulum. In Debaryomyces hansenii (strain ATCC 36239 / CBS 767 / BCRC 21394 / JCM 1990 / NBRC 0083 / IGC 2968) (Yeast), this protein is Vacuolar ATPase assembly integral membrane protein VMA21.